The sequence spans 259 residues: Phospholipase YtpA (259 aa).

Serine 88 serves as the catalytic Nucleophile. Residues aspartate 206 and histidine 236 each act as charge relay system in the active site.

Belongs to the AB hydrolase superfamily.

It participates in antibiotic biosynthesis; bacilysocin biosynthesis. In terms of biological role, phospholipase involved in the biosynthesis of the antibiotic bacilysocin. It probably catalyzes the hydrolysis of the 2-sn-acyl moiety of phosphatidylglycerol to produce bacilysocin (lysophosphatidylglycerol). Is also able to catalyze the hydrolysis reaction of one acyl bond in phosphatidylcholine in vitro (actual cleavage point is unknown), resulting in lysophosphatidylcholine. This chain is Phospholipase YtpA (ytpA), found in Bacillus subtilis (strain 168).